Here is a 272-residue protein sequence, read N- to C-terminus: Shikimate dehydrogenase (NADP(+)) (272 aa).

Residues 14–16 (SKS) and Thr-61 each bind shikimate. Lys-65 functions as the Proton acceptor in the catalytic mechanism. Positions 86 and 102 each coordinate shikimate. NADP(+)-binding positions include 126–130 (GAGGA), 150–155 (NRTASK), and Met-214. Tyr-216 is a binding site for shikimate. Position 239 (Gly-239) interacts with NADP(+).

It belongs to the shikimate dehydrogenase family. Homodimer.

It catalyses the reaction shikimate + NADP(+) = 3-dehydroshikimate + NADPH + H(+). Its pathway is metabolic intermediate biosynthesis; chorismate biosynthesis; chorismate from D-erythrose 4-phosphate and phosphoenolpyruvate: step 4/7. Involved in the biosynthesis of the chorismate, which leads to the biosynthesis of aromatic amino acids. Catalyzes the reversible NADPH linked reduction of 3-dehydroshikimate (DHSA) to yield shikimate (SA). This is Shikimate dehydrogenase (NADP(+)) from Pseudoalteromonas atlantica (strain T6c / ATCC BAA-1087).